The following is a 464-amino-acid chain: Soluble pyridine nucleotide transhydrogenase (464 aa).

Residue 35-44 (DDRRQVGGNC) coordinates FAD.

This sequence belongs to the class-I pyridine nucleotide-disulfide oxidoreductase family. FAD is required as a cofactor.

It is found in the cytoplasm. The catalysed reaction is NAD(+) + NADPH = NADH + NADP(+). In terms of biological role, conversion of NADPH, generated by peripheral catabolic pathways, to NADH, which can enter the respiratory chain for energy generation. The protein is Soluble pyridine nucleotide transhydrogenase of Pseudomonas putida (strain ATCC 47054 / DSM 6125 / CFBP 8728 / NCIMB 11950 / KT2440).